Here is a 27-residue protein sequence, read N- to C-terminus: Urumin (27 aa).

As to expression, expressed by the skin glands.

The protein resides in the secreted. Amphibian peptide that shows viricidal activity against human H1N1 influenza A virus. It specifically targets the conserved stalk region of H1 hemagglutinin, and acts by actively destroying influenza virions. It shows a reduced activity on human H3N2 influenza A virus and no activity against other viruses (HIV, SIV, HSV-II, hepatitis C, Ebola, Zika, and Dengue viruses). In vivo, the peptide also protects mice infected with mouse-adapted influenza virus from lethal influenza infection. The peptide synthesized in D-amino acids is inactive. The protein is Urumin of Hydrophylax bahuvistara (Wide-spread fungoid frog).